The primary structure comprises 95 residues: Putative septation protein SpoVG (95 aa).

Belongs to the SpoVG family.

Its function is as follows. Could be involved in septation. This chain is Putative septation protein SpoVG, found in Brevibacillus brevis (strain 47 / JCM 6285 / NBRC 100599).